The following is a 215-amino-acid chain: Riboflavin synthase (215 aa).

Lumazine-binding repeat units lie at residues 1–96 (MFTG…FGGH) and 97–193 (FVSG…YRFL). 2,4-dihydroxypteridine is bound by residues 4–6 (GIV), 47–49 (CLT), 61–66 (DVMPET), 100–102 (GHV), Lys-135, 144–146 (SST), and 158–163 (SVIPHT).

As to quaternary structure, homotrimer.

It catalyses the reaction 2 6,7-dimethyl-8-(1-D-ribityl)lumazine + H(+) = 5-amino-6-(D-ribitylamino)uracil + riboflavin. It participates in cofactor biosynthesis; riboflavin biosynthesis; riboflavin from 2-hydroxy-3-oxobutyl phosphate and 5-amino-6-(D-ribitylamino)uracil: step 2/2. Its function is as follows. Catalyzes the dismutation of two molecules of 6,7-dimethyl-8-ribityllumazine, resulting in the formation of riboflavin and 5-amino-6-(D-ribitylamino)uracil. The chain is Riboflavin synthase (ribE) from Bacillus amyloliquefaciens (Bacillus velezensis).